The sequence spans 105 residues: Antithrombin-III (105 aa).

Positions 1–17 (MHLFIGVSLRPLGHGIP) are cleaved as a signal peptide. Positions 38–105 (ICIYRNPEKK…MRRTSSCRPS (68 aa)) are disordered. The segment covering 43 to 53 (NPEKKPQERRG) has biased composition (basic and acidic residues).

The protein belongs to the serpin family. In terms of assembly, forms protease inhibiting heterodimer with TMPRSS7. In terms of tissue distribution, plasma.

The protein resides in the secreted. It is found in the extracellular space. Its function is as follows. Most important serine protease inhibitor in plasma that regulates the blood coagulation cascade. AT-III inhibits thrombin, matriptase-3/TMPRSS7, as well as factors IXa, Xa and XIa. Its inhibitory activity is greatly enhanced in the presence of heparin. This chain is Antithrombin-III (SERPINC1), found in Gallus gallus (Chicken).